Consider the following 469-residue polypeptide: GDP-fucose protein O-fucosyltransferase 2 (469 aa).

An N-terminal signal peptide occupies residues 1 to 18 (MKFIIVLLLFFFFKVIDR). Residues 56-60 (GEGFN), 277-279 (HLR), and 373-374 (RF) each bind GDP-beta-L-fucose. The Proton acceptor role is filled by Glu-57.

Belongs to the glycosyltransferase 68 family.

It localises to the endoplasmic reticulum. The catalysed reaction is L-seryl-[protein] + GDP-beta-L-fucose = 3-O-(alpha-L-fucosyl)-L-seryl-[protein] + GDP + H(+). The enzyme catalyses L-threonyl-[protein] + GDP-beta-L-fucose = 3-O-(alpha-L-fucosyl)-L-threonyl-[protein] + GDP + H(+). It participates in protein modification; protein glycosylation. Catalyzes the reaction that attaches fucose through an O-glycosidic linkage to a conserved serine or threonine residue in the consensus sequence C1-X-X-S/T-C2 of thrombospondin type I repeats (TSRs) where C1 and C2 are the first and second cysteines of the repeat, respectively. O-fucosylates sporozoite proteins CSP and TRAP. O-fucosylation regulates stability and intracellular trafficking of TRAP but not of CSP. Probably by regulating protein O-fucosylation, may play a role in parasite transmission to the mosquito vector and/or infection of the vertebrate host hepatocytes; however, POFUT2 involvement in transmission/infection is controversial. The protein is GDP-fucose protein O-fucosyltransferase 2 of Plasmodium falciparum (isolate NF54).